A 265-amino-acid chain; its full sequence is Undecaprenyl-diphosphatase (265 aa).

Helical transmembrane passes span 42–62 (AATF…VLYW), 82–102 (GIML…AAHS), 108–128 (LFTP…MLLV), 143–163 (MSPA…WPGF), 181–201 (GLAA…ATGY), 221–241 (GFVV…ALVG), and 248–264 (FAWY…YFMA).

It belongs to the UppP family.

Its subcellular location is the cell inner membrane. It catalyses the reaction di-trans,octa-cis-undecaprenyl diphosphate + H2O = di-trans,octa-cis-undecaprenyl phosphate + phosphate + H(+). Its function is as follows. Catalyzes the dephosphorylation of undecaprenyl diphosphate (UPP). Confers resistance to bacitracin. The sequence is that of Undecaprenyl-diphosphatase from Nitratidesulfovibrio vulgaris (strain DP4) (Desulfovibrio vulgaris).